Reading from the N-terminus, the 289-residue chain is Heme oxygenase 1 (289 aa).

A compositionally biased stretch (polar residues) spans 1–12 (MERPQPDSSMPQ). A disordered region spans residues 1-24 (MERPQPDSSMPQDLSEALKEATKE). Topologically, residues 1–266 (MERPQPDSSM…KPQPSVLSQA (266 aa)) are cytoplasmic. The heme b site is built by Lys-19, His-26, Tyr-135, and Arg-184. Residues 239–261 (RRAGSKVQDLAPTKASRGKPQPS) form a disordered region. Residue Ser-243 is modified to Phosphoserine. Residues 267–289 (PLLRWVLTLSFLVATVAVGLYAM) traverse the membrane as a helical; Anchor for type IV membrane protein segment.

It belongs to the heme oxygenase family. As to quaternary structure, homodimer and higher order homooligomer. Oligomerization is crucial for its stability and function in the endoplasmic reticulum. Interacts with FLVCR2; this interaction is potentiated in the presence of heme. Post-translationally, a soluble form arises by proteolytic removal of the membrane anchor.

The protein resides in the endoplasmic reticulum membrane. The enzyme catalyses heme b + 3 reduced [NADPH--hemoprotein reductase] + 3 O2 = biliverdin IXalpha + CO + Fe(2+) + 3 oxidized [NADPH--hemoprotein reductase] + 3 H2O + H(+). With respect to regulation, inhibited by metalloporphyrins such as Sn-, Co-, Mn- and Zn-protoporphyrins. Its function is as follows. Catalyzes the oxidative cleavage of heme at the alpha-methene bridge carbon, released as carbon monoxide (CO), to generate biliverdin IXalpha, while releasing the central heme iron chelate as ferrous iron. Affords protection against programmed cell death and this cytoprotective effect relies on its ability to catabolize free heme and prevent it from sensitizing cells to undergo apoptosis. Functionally, catalyzes the oxidative cleavage of heme at the alpha-methene bridge carbon, released as carbon monoxide (CO), to generate biliverdin IXalpha, while releasing the central heme iron chelate as ferrous iron. This is Heme oxygenase 1 (HMOX1) from Bos taurus (Bovine).